A 124-amino-acid polypeptide reads, in one-letter code: Fluoride-specific ion channel FluC (124 aa).

Helical transmembrane passes span 3 to 23, 36 to 56, 66 to 86, and 100 to 120; these read YLLV…INTV, TFFI…YFAF, LFLM…SLDA, and LYVL…LALI. Residues Gly74 and Thr77 each contribute to the Na(+) site.

This sequence belongs to the fluoride channel Fluc/FEX (TC 1.A.43) family.

The protein resides in the cell inner membrane. The enzyme catalyses fluoride(in) = fluoride(out). With respect to regulation, na(+) is not transported, but it plays an essential structural role and its presence is essential for fluoride channel function. Fluoride-specific ion channel. Important for reducing fluoride concentration in the cell, thus reducing its toxicity. This is Fluoride-specific ion channel FluC from Rhodopseudomonas palustris (strain BisB5).